The chain runs to 306 residues: Pantothenate kinase (306 aa).

90 to 97 (GSVAVGKS) contacts ATP.

This sequence belongs to the prokaryotic pantothenate kinase family.

It localises to the cytoplasm. It carries out the reaction (R)-pantothenate + ATP = (R)-4'-phosphopantothenate + ADP + H(+). It participates in cofactor biosynthesis; coenzyme A biosynthesis; CoA from (R)-pantothenate: step 1/5. In Listeria monocytogenes serotype 4a (strain HCC23), this protein is Pantothenate kinase.